Here is a 180-residue protein sequence, read N- to C-terminus: Ribulose bisphosphate carboxylase small subunit, chloroplastic 2 (180 aa).

The transit peptide at 1–54 (MASMMSNAAVVGRTTPAQASMVAPFTGLKSVSAFPVTKKSNDITSIASNGGRVQ) directs the protein to the chloroplast.

The protein belongs to the RuBisCO small chain family. Heterohexadecamer of 8 large and 8 small subunits.

The protein resides in the plastid. The protein localises to the chloroplast. Functionally, ruBisCO catalyzes two reactions: the carboxylation of D-ribulose 1,5-bisphosphate, the primary event in carbon dioxide fixation, as well as the oxidative fragmentation of the pentose substrate. Both reactions occur simultaneously and in competition at the same active site. Although the small subunit is not catalytic it is essential for maximal activity. The polypeptide is Ribulose bisphosphate carboxylase small subunit, chloroplastic 2 (Mesembryanthemum crystallinum (Common ice plant)).